A 239-amino-acid polypeptide reads, in one-letter code: 1-(5-phosphoribosyl)-5-[(5-phosphoribosylamino)methylideneamino] imidazole-4-carboxamide isomerase (239 aa).

D8 acts as the Proton acceptor in catalysis. Residue D129 is the Proton donor of the active site.

Belongs to the HisA/HisF family.

It is found in the cytoplasm. The catalysed reaction is 1-(5-phospho-beta-D-ribosyl)-5-[(5-phospho-beta-D-ribosylamino)methylideneamino]imidazole-4-carboxamide = 5-[(5-phospho-1-deoxy-D-ribulos-1-ylimino)methylamino]-1-(5-phospho-beta-D-ribosyl)imidazole-4-carboxamide. The protein operates within amino-acid biosynthesis; L-histidine biosynthesis; L-histidine from 5-phospho-alpha-D-ribose 1-diphosphate: step 4/9. The polypeptide is 1-(5-phosphoribosyl)-5-[(5-phosphoribosylamino)methylideneamino] imidazole-4-carboxamide isomerase (Pelagibacter ubique (strain HTCC1062)).